Consider the following 80-residue polypeptide: Cell division protein ZapB (80 aa).

Residues 3–80 (LEILEQLEAK…GLLGKMDEVE (78 aa)) adopt a coiled-coil conformation. The segment at 41–60 (LEQANNGRSEVEQEAQRARD) is disordered. Residues 49–60 (SEVEQEAQRARD) show a composition bias toward basic and acidic residues.

This sequence belongs to the ZapB family. As to quaternary structure, homodimer. The ends of the coiled-coil dimer bind to each other, forming polymers. Interacts with FtsZ.

It localises to the cytoplasm. Non-essential, abundant cell division factor that is required for proper Z-ring formation. It is recruited early to the divisome by direct interaction with FtsZ, stimulating Z-ring assembly and thereby promoting cell division earlier in the cell cycle. Its recruitment to the Z-ring requires functional FtsA or ZipA. The chain is Cell division protein ZapB from Aliivibrio fischeri (strain ATCC 700601 / ES114) (Vibrio fischeri).